A 328-amino-acid polypeptide reads, in one-letter code: D-cysteine desulfhydrase (328 aa).

Lys51 is modified (N6-(pyridoxal phosphate)lysine).

It belongs to the ACC deaminase/D-cysteine desulfhydrase family. Homodimer. Requires pyridoxal 5'-phosphate as cofactor.

It carries out the reaction D-cysteine + H2O = hydrogen sulfide + pyruvate + NH4(+) + H(+). Functionally, catalyzes the alpha,beta-elimination reaction of D-cysteine and of several D-cysteine derivatives. It could be a defense mechanism against D-cysteine. The polypeptide is D-cysteine desulfhydrase (Salmonella typhimurium (strain LT2 / SGSC1412 / ATCC 700720)).